A 159-amino-acid polypeptide reads, in one-letter code: Neuroglobin-1 (159 aa).

The region spanning 3–151 (KLTEKEKELI…VVAAMSRGWA (149 aa)) is the Globin domain. Heme b is bound by residues His66 and His98.

This sequence belongs to the globin family. Monomer. Homodimers and homotetramers. Mainly monomeric but also detected as part of homodimers and homotetramers.

Its subcellular location is the cytoplasm. The protein localises to the cytosol. It localises to the mitochondrion matrix. The catalysed reaction is Fe(III)-heme b-[protein] + nitric oxide + H2O = Fe(II)-heme b-[protein] + nitrite + 2 H(+). Functionally, monomeric globin with a bis-histidyl six-coordinate heme-iron atom through which it can bind dioxygen, carbon monoxide and nitric oxide. Could help transport oxygen and increase its availability to the metabolically active neuronal tissues, though its low quantity in tissues as well as its high affinity for dioxygen, which may limit its oxygen-releasing ability, argue against it. The ferrous/deoxygenated form exhibits a nitrite reductase activity and it could produce nitric oxide which in turn inhibits cellular respiration in response to hypoxia. In its ferrous/deoxygenated state, it may also exhibit GDI (Guanine nucleotide Dissociation Inhibitor) activity toward heterotrimeric G-alpha proteins, thereby regulating signal transduction to facilitate neuroprotective responses in the wake of hypoxia and associated oxidative stress. The polypeptide is Neuroglobin-1 (ngb1) (Oncorhynchus mykiss (Rainbow trout)).